Reading from the N-terminus, the 408-residue chain is Na(+)-translocating NADH-quinone reductase subunit F (408 aa).

Residues 4-24 (VYLGVGMFTAIVLVLVLVILF) form a helical membrane-spanning segment. A 2Fe-2S ferredoxin-type domain is found at 33–127 (GDIIIGINGD…DMEIELDEEI (95 aa)). 4 residues coordinate [2Fe-2S] cluster: Cys70, Cys76, Cys79, and Cys111. Positions 130-270 (IKKWECDVIS…SGPFGEFFAK (141 aa)) constitute an FAD-binding FR-type domain.

The protein belongs to the NqrF family. In terms of assembly, composed of six subunits; NqrA, NqrB, NqrC, NqrD, NqrE and NqrF. It depends on [2Fe-2S] cluster as a cofactor. FAD is required as a cofactor.

It is found in the cell inner membrane. It carries out the reaction a ubiquinone + n Na(+)(in) + NADH + H(+) = a ubiquinol + n Na(+)(out) + NAD(+). In terms of biological role, NQR complex catalyzes the reduction of ubiquinone-1 to ubiquinol by two successive reactions, coupled with the transport of Na(+) ions from the cytoplasm to the periplasm. The first step is catalyzed by NqrF, which accepts electrons from NADH and reduces ubiquinone-1 to ubisemiquinone by a one-electron transfer pathway. The protein is Na(+)-translocating NADH-quinone reductase subunit F of Shewanella denitrificans (strain OS217 / ATCC BAA-1090 / DSM 15013).